Here is a 211-residue protein sequence, read N- to C-terminus: Uracil phosphoribosyltransferase (211 aa).

5-phospho-alpha-D-ribose 1-diphosphate is bound by residues Arg-81, Arg-106, and 133–141 (DPMLATGNS). Uracil is bound by residues Ile-196 and 201-203 (GDA). Asp-202 contributes to the 5-phospho-alpha-D-ribose 1-diphosphate binding site.

It belongs to the UPRTase family. Mg(2+) serves as cofactor.

The enzyme catalyses UMP + diphosphate = 5-phospho-alpha-D-ribose 1-diphosphate + uracil. It participates in pyrimidine metabolism; UMP biosynthesis via salvage pathway; UMP from uracil: step 1/1. Allosterically activated by GTP. Functionally, catalyzes the conversion of uracil and 5-phospho-alpha-D-ribose 1-diphosphate (PRPP) to UMP and diphosphate. This chain is Uracil phosphoribosyltransferase, found in Paracoccus denitrificans (strain Pd 1222).